A 261-amino-acid chain; its full sequence is Follistatin-related protein 3 (261 aa).

Positions 1–26 (MRPRAPGPLWPLPWGALAWAVGFVGS) are cleaved as a signal peptide. The TB domain occupies 36–107 (GVCWLQQGRE…SCEGVECGPG (72 aa)). Disulfide bonds link Cys38–Cys61, Cys48–Cys92, Cys62–Cys95, Cys99–Cys110, Cys104–Cys119, Cys121–Cys153, Cys125–Cys146, and Cys135–Cys167. The N-linked (GlcNAc...) asparagine glycan is linked to Asn73. The 21-residue stretch at 99–119 (CEGVECGPGKACRMLGGRPRC) folds into the Follistatin-like 1 domain. Kazal-like domains follow at residues 113–169 (LGGR…RCRK) and 189–245 (SAHC…SCAG). The Follistatin-like 2 domain occupies 170-193 (SCAHVVCLRPQSCVVDQTGSAHCV). 3 disulfide bridges follow: Cys195/Cys229, Cys200/Cys222, and Cys211/Cys243. N-linked (GlcNAc...) asparagine glycosylation is present at Asn215. Positions 242–261 (SCAGTPEPLDPESEEEENFV) are disordered. Positions 250–261 (LDPESEEEENFV) are enriched in acidic residues.

In terms of assembly, interacts with INHBA and INHBB. Interacts with FN1. Interacts with ADAM12. Interacts with MLLT10; the interaction enhances MLLT10 in vitro transcriptional activity and self-association. Interacts with MSTN.

Its subcellular location is the secreted. It is found in the nucleus. Functionally, the secreted form is a binding and antagonizing protein for members of the TGF-beta family, such as activin, BMP2 and MSTN. Inhibits activin A-, activin B-, BMP2- and MSDT-induced cellular signaling; more effective on activin A than on activin B. Involved in bone formation; inhibits osteoclast differentiation. Involved in hematopoiesis; involved in differentiation of hemopoietic progenitor cells, increases hematopoietic cell adhesion to fibronectin and seems to contribute to the adhesion of hematopoietic precursor cells to the bone marrow stroma. The nuclear form is probably involved in transcriptional regulation via interaction with MLLT10. The sequence is that of Follistatin-related protein 3 (FSTL3) from Bos taurus (Bovine).